Here is an 86-residue protein sequence, read N- to C-terminus: Putative defensin-like protein 244 (86 aa).

The N-terminal stretch at methionine 1 to alanine 22 is a signal peptide. Disulfide bonds link cysteine 28–cysteine 83, cysteine 38–cysteine 67, cysteine 48–cysteine 77, and cysteine 65–cysteine 79.

The protein belongs to the DEFL family.

The protein localises to the secreted. The protein is Putative defensin-like protein 244 (SCRL11) of Arabidopsis thaliana (Mouse-ear cress).